Consider the following 410-residue polypeptide: MQKATYCDGSAIYSGLPYQSANGLGYDASQQQYLQALHAESEYHRPACSLQSPGISAGLHTSNEMSEVCQQINGTQATVTDTSDNKQPPTAPSGPSSPSSLNQIPNIDSAAKNPVHVSPTPSTRKHIFPWMKESRQNTKQKSCSIISVESCAGDKSPPGSAASKRARTAYTSAQLVELEKEFHFNRYLCRPRRVEMANLLNLTERQIKIWFQNRRMKYKKDQKGLGMMPSPGAQSPHSPVSLSSGGGGGGGSAYLSSMHSLVNSVTYDSPSPASYNKPQSNTYSLPTSYPPLNNCPPPQKRYQGTGTATPEYDTHHIQGNNNYGTQVQGSPVYVSGGGGYSDSLVGMGASVFGLTHLPHPSQGNIDYNGAITMGNSHQQGACDSNPCTFTDLTPHYSQGRIQEAPKLTHL.

The tract at residues 79–126 is disordered; the sequence is VTDTSDNKQPPTAPSGPSSPSSLNQIPNIDSAAKNPVHVSPTPSTRKH. The Antp-type hexapeptide motif lies at 127 to 132; it reads IFPWMK. Residues 163-222 constitute a DNA-binding region (homeobox); the sequence is SKRARTAYTSAQLVELEKEFHFNRYLCRPRRVEMANLLNLTERQIKIWFQNRRMKYKKDQ. The tract at residues 222–249 is disordered; that stretch reads QKGLGMMPSPGAQSPHSPVSLSSGGGGG.

Belongs to the Antp homeobox family.

It is found in the nucleus. Its function is as follows. Sequence-specific transcription factor which is part of a developmental regulatory system that provides cells with specific positional identities on the anterior-posterior axis. The polypeptide is Homeobox protein Hox-A3a (hoxa3a) (Danio rerio (Zebrafish)).